A 360-amino-acid polypeptide reads, in one-letter code: Phenylalanine--tRNA ligase alpha subunit (360 aa).

Residue glutamate 264 coordinates Mg(2+).

The protein belongs to the class-II aminoacyl-tRNA synthetase family. Phe-tRNA synthetase alpha subunit type 1 subfamily. As to quaternary structure, tetramer of two alpha and two beta subunits. Requires Mg(2+) as cofactor.

The protein resides in the cytoplasm. The enzyme catalyses tRNA(Phe) + L-phenylalanine + ATP = L-phenylalanyl-tRNA(Phe) + AMP + diphosphate + H(+). This Streptomyces avermitilis (strain ATCC 31267 / DSM 46492 / JCM 5070 / NBRC 14893 / NCIMB 12804 / NRRL 8165 / MA-4680) protein is Phenylalanine--tRNA ligase alpha subunit.